Reading from the N-terminus, the 276-residue chain is C-type lectin domain family 12 member B (276 aa).

The Cytoplasmic segment spans residues 1 to 43 (MSEDMTYATLTFQDSVAAGNNQDRNNLRKRGYPAPSSIWRQAA). Residues 5–10 (MTYATL) carry the ITIM motif motif. Y7 bears the Phosphotyrosine mark. Residues 44–64 (LGLLTLCVMLLIGLVTLGIMF) traverse the membrane as a helical; Signal-anchor for type II membrane protein segment. Over 65–276 (LQMSSEINSD…AALVKIEDLD (212 aa)) the chain is Extracellular. N-linked (GlcNAc...) asparagine glycosylation is found at N91, N176, and N237. The region spanning 150 to 264 (YQTSCYYFAV…CSAEISWICE (115 aa)) is the C-type lectin domain. 2 cysteine pairs are disulfide-bonded: C172–C263 and C242–C255.

In terms of assembly, homodimer. Interacts (via ITIM motif) with PTPN6. Interacts (via ITIM motif) with PTPN11; this interaction triggers dephosphorylation and activation of PTPN11.

The protein localises to the cell membrane. In terms of biological role, inhibitory receptor postulated to negatively regulate immune and non-immune functions. Upon phosphorylation, recruits SH2 domain-containing PTPN6 and PTPN11 phosphatases to its ITIM motif and antagonizes activation signals. Although it inhibits KLRK1/NKG2D-mediated signaling, it does not bind known ligands of KLRK1/NKG2D and therefore is not its inhibitory counterpart. May limit activation of myeloid cell subsets in response to infection or tissue inflammation. May protect target cells against natural killer cell-mediated lysis. May negatively regulate cell cycle and differentiation of melanocytes via inactivation of STAT3. The polypeptide is C-type lectin domain family 12 member B (CLEC12B) (Bos taurus (Bovine)).